Reading from the N-terminus, the 211-residue chain is Uridine kinase (211 aa).

12-19 (GGSGSGKT) provides a ligand contact to ATP.

This sequence belongs to the uridine kinase family.

It localises to the cytoplasm. The catalysed reaction is uridine + ATP = UMP + ADP + H(+). The enzyme catalyses cytidine + ATP = CMP + ADP + H(+). It participates in pyrimidine metabolism; CTP biosynthesis via salvage pathway; CTP from cytidine: step 1/3. Its pathway is pyrimidine metabolism; UMP biosynthesis via salvage pathway; UMP from uridine: step 1/1. The protein is Uridine kinase of Geobacillus kaustophilus (strain HTA426).